Reading from the N-terminus, the 432-residue chain is Adenylosuccinate synthetase (432 aa).

Residues 12-18 and 40-42 contribute to the GTP site; these read GDEGKGK and GHT. D13 (proton acceptor) is an active-site residue. Mg(2+) is bound by residues D13 and G40. IMP-binding positions include 13–16, 38–41, T128, R142, Q223, T238, and R302; these read DEGK and NAGH. H41 acts as the Proton donor in catalysis. Substrate is bound at residue 298-304; that stretch reads TVTGRPR. GTP is bound by residues R304, 330-332, and 412-414; these read LLD and SVG.

The protein belongs to the adenylosuccinate synthetase family. As to quaternary structure, homodimer. Requires Mg(2+) as cofactor.

The protein resides in the cytoplasm. The enzyme catalyses IMP + L-aspartate + GTP = N(6)-(1,2-dicarboxyethyl)-AMP + GDP + phosphate + 2 H(+). It participates in purine metabolism; AMP biosynthesis via de novo pathway; AMP from IMP: step 1/2. Its function is as follows. Plays an important role in the de novo pathway of purine nucleotide biosynthesis. Catalyzes the first committed step in the biosynthesis of AMP from IMP. The chain is Adenylosuccinate synthetase from Limosilactobacillus reuteri (strain DSM 20016) (Lactobacillus reuteri).